Reading from the N-terminus, the 97-residue chain is MQKSEGFRSKTRYKLSKHPRQKGLFPLTRALKCYTEGDTVHVVIDPSVQKGMPHPKFHGKTGTVVSQRGRAFLVRVKDGGKYKDIIARPQHLRESKL.

This sequence belongs to the eukaryotic ribosomal protein eL21 family.

The polypeptide is Large ribosomal subunit protein eL21 (Methanococcus vannielii (strain ATCC 35089 / DSM 1224 / JCM 13029 / OCM 148 / SB)).